Reading from the N-terminus, the 566-residue chain is Proline--tRNA ligase (566 aa).

The protein belongs to the class-II aminoacyl-tRNA synthetase family. ProS type 1 subfamily. As to quaternary structure, homodimer.

It localises to the cytoplasm. It carries out the reaction tRNA(Pro) + L-proline + ATP = L-prolyl-tRNA(Pro) + AMP + diphosphate. Catalyzes the attachment of proline to tRNA(Pro) in a two-step reaction: proline is first activated by ATP to form Pro-AMP and then transferred to the acceptor end of tRNA(Pro). As ProRS can inadvertently accommodate and process non-cognate amino acids such as alanine and cysteine, to avoid such errors it has two additional distinct editing activities against alanine. One activity is designated as 'pretransfer' editing and involves the tRNA(Pro)-independent hydrolysis of activated Ala-AMP. The other activity is designated 'posttransfer' editing and involves deacylation of mischarged Ala-tRNA(Pro). The misacylated Cys-tRNA(Pro) is not edited by ProRS. This chain is Proline--tRNA ligase, found in Coxiella burnetii (strain RSA 493 / Nine Mile phase I).